Reading from the N-terminus, the 209-residue chain is MQTLRQEAARPCIPSGTLEASFPAPLYSDDYLSLEGSRWPPAIRQATRWKYTPMGRDAAGQLWYTGLTNSDAWEAWYNLPRAPASPFREAYNRWHSCYQHRECSMPSAYTQHLRETAWHDPIVPAQYQAPSTRWGSALWKDRPIRGKEYVLNRNRYGVEPLWRASDYVPSLSAPQRPPGTTQNYREWVLEPYCPSTCQRSPPSLTPTPR.

Microtubule inner protein component of sperm flagellar doublet microtubules.

It is found in the cytoplasm. The protein localises to the cytoskeleton. Its subcellular location is the cilium axoneme. It localises to the flagellum axoneme. Its function is as follows. Microtubule inner protein (MIP) part of the dynein-decorated doublet microtubules (DMTs) in cilia axoneme, which is required for motile cilia beating. Located at the center of the tektin bundle where may function to recruit tektins or stabilize the bundle. This chain is Tektin bundle-interacting protein 1, found in Homo sapiens (Human).